A 1388-amino-acid chain; its full sequence is MSRPPPTGKMPGAPEAAPGDGAGAGRQRKLEALIRDPRSPINVESLLDGLNSLVLDLDFPALRKNKNIDNFLNRYEKIVKKIRGLQMKAEDYDVVKVIGRGAFGEVQLVRHKASQKVYAMKLLSKFEMIKRSDSAFFWEERDIMAFANSPWVVQLFCAFQDDRYLYMVMEYMPGGDLVNLMSNYDVPEKWAKFYTAEVVLALDAIHSMGLIHRDVKPDNMLLDKHGHLKLADFGTCMKMDETGMVHCDTAVGTPDYISPEVLKSQGGDGYYGRECDWWSVGVFLFEMLVGDTPFYADSLVGTYSKIMDHKNSLCFPEDTEISKHAKNLICAFLTDREVRLGRNGVEEIKQHPFFKNDQWNWDNIRETAAPVVPELSSDIDSSNFDDIEDDKGDVETFPIPKAFVGNQLPFIGFTYFRENLLLSDSPPCRENDAIQTRKSEESQEIQKKLYALEEHLSSEVQAKEELEQKCKSINTRLEKTAKELEEEITLRKSVESTLRQLEREKALLQHKNAEYQRKADHEADKKRNLENDVNSLKDQLEDLKKRNQSSQISTEKVNQLQKQLDEANALLRTESDTAARLRKTQAESSKQIQQLESNNRDLQDKNCLLETAKLKLEKEFINLQSALESERRDRTHGSEIINDLQGRISGLEEDLKTGKALLAKVELEKRQLQEKLTDLEKEKSNMEIDMTYQLKVIQQSLEQEEAEHKTTKARLADKNKIYESIEEAKSEAMKEMEKKLLEERSLKQKVENLLLEAEKRCSILDCDLKQSQQKLNELLKQKDVLNEDVRNLTLKIEQETQKRCLMQNDLKMQTQQVNTLKMSEKQIKQENNHLMEMKMNLEKQNTELRKERQDADGQMKELQDQLEAEQYFSTLYKTQVRELKEENEEKTKLCKELQQKKQDLQDERDSLAAQLEITLTKADSEQLARSIAEEQYSDLEKEKIMKELEIKEMMARHKQELTEKDTTIASLEETNRTLTSDVANLANEKEELNNKLKDSQEQLSKLKDEEMSAAAIKAQFEKQLLNERTLKTQAVNKLAEIMNRKEPVKRGSDTDVRRKEKENRKLHMELKSEREKLTQQMIKYQKELNEMQAQIAEESQIRIELQMTLDSKDSDIEQLRSQLQALHIGMDSSSIGSGPGDAEPDDGFPESRLEGWLSLPVRNNTKKFGWVKKYVIVSSKKILFYDSEQDKEQSNPYMVLDIDKLFHVRPVTQTDVYRADAKEIPRIFQILYANEGESKKEPEFPVEPVGEKSNYICHKGHEFIPTLYHFPTNCEACMKPLWHMFKPPPALECRRCHIKCHKDHMDKKEEIIAPCKVYYDISSAKNLLLLANSTEEQQKWVSRLVKKIPKKPPAPDPFARSSPRTSMKIQQNQSIRRPSRQLAPNKPS.

The tract at residues 1–26 (MSRPPPTGKMPGAPEAAPGDGAGAGR) is disordered. In terms of domain architecture, Protein kinase spans 92-354 (YDVVKVIGRG…VEEIKQHPFF (263 aa)). ATP is bound by residues 98–106 (IGRGAFGEV) and lysine 121. The active-site Proton acceptor is aspartate 214. An AGC-kinase C-terminal domain is found at 357–425 (DQWNWDNIRE…FRENLLLSDS (69 aa)). The tract at residues 363-784 (NIRETAAPVV…LNELLKQKDV (422 aa)) is interaction with PPP1R12A. Residues 373 to 420 (PELSSDIDSSNFDDIEDDKGDVETFPIPKAFVGNQLPFIGFTYFRENL) are interaction with NPM1. Threonine 414 carries the post-translational modification Phosphothreonine; by ROCK2. The stretch at 439 to 1131 (SEESQEIQKK…QLQALHIGMD (693 aa)) forms a coiled coil. In terms of domain architecture, REM-1 spans 497–573 (TLRQLEREKA…LDEANALLRT (77 aa)). Over residues 512–530 (NAEYQRKADHEADKKRNLE) the composition is skewed to basic and acidic residues. Residues 512–532 (NAEYQRKADHEADKKRNLEND) are disordered. Tyrosine 722 is modified (phosphotyrosine; by SRC). The RhoBD domain occupies 979–1047 (TSDVANLANE…LAEIMNRKEP (69 aa)). Positions 979–1047 (TSDVANLANE…LAEIMNRKEP (69 aa)) are RHOA binding. Serine 1137 carries the phosphoserine modification. Positions 1150 to 1349 (ESRLEGWLSL…WVSRLVKKIP (200 aa)) constitute a PH domain. Threonine 1212 is modified (phosphothreonine). Residues 1260–1315 (GHEFIPTLYHFPTNCEACMKPLWHMFKPPPALECRRCHIKCHKDHMDKKEEIIAPC) form a Phorbol-ester/DAG-type zinc finger. Positions 1345–1388 (VKKIPKKPPAPDPFARSSPRTSMKIQQNQSIRRPSRQLAPNKPS) are disordered. Serine 1362 and serine 1374 each carry phosphoserine. Residues 1362-1376 (SPRTSMKIQQNQSIR) are compositionally biased toward polar residues.

This sequence belongs to the protein kinase superfamily. AGC Ser/Thr protein kinase family. Homodimer. Interacts with IRS1. Interacts with RAF1. Interacts with RHOA (activated by GTP), RHOB and RHOC. Interacts with PPP1R12A. Interacts with EP300. Interacts with CHORDC1. Interacts with BRCA2. Interacts with NPM1; this interaction enhances ROCK2 activity. Interacts with SORL1. Interacts with PJVK. Requires Mg(2+) as cofactor. Post-translationally, autophosphorylated. Phosphorylation at Tyr-722 reduces its binding to RHOA and is crucial for focal adhesion dynamics. Dephosphorylation by PTPN11 stimulates its RHOA binding activity. In terms of processing, cleaved by granzyme B during apoptosis. This leads to constitutive activation of the kinase and membrane blebbing. In terms of tissue distribution, highly expressed in brain, heart, lung, liver, stomach, spleen, kidney, testis, muscle, embryo and placenta. Isoform 2 is expressed predominantly in the skeletal muscle.

Its subcellular location is the cytoplasm. It localises to the cell membrane. The protein resides in the nucleus. The protein localises to the cytoskeleton. It is found in the microtubule organizing center. Its subcellular location is the centrosome. It carries out the reaction L-seryl-[protein] + ATP = O-phospho-L-seryl-[protein] + ADP + H(+). It catalyses the reaction L-threonyl-[protein] + ATP = O-phospho-L-threonyl-[protein] + ADP + H(+). Its activity is regulated as follows. Activated by RHOA binding. Inhibited by Y-27632. Its function is as follows. Protein kinase which is a key regulator of actin cytoskeleton and cell polarity. Involved in regulation of smooth muscle contraction, actin cytoskeleton organization, stress fiber and focal adhesion formation, neurite retraction, cell adhesion and motility via phosphorylation of ADD1, BRCA2, CNN1, EZR, DPYSL2, EP300, MSN, MYL9/MLC2, NPM1, RDX, PPP1R12A and VIM. Phosphorylates SORL1 and IRF4. Acts as a negative regulator of VEGF-induced angiogenic endothelial cell activation. Positively regulates the activation of p42/MAPK1-p44/MAPK3 and of p90RSK/RPS6KA1 during myogenic differentiation. Plays an important role in the timely initiation of centrosome duplication. Inhibits keratinocyte terminal differentiation. May regulate closure of the eyelids and ventral body wall through organization of actomyosin bundles. Plays a critical role in the regulation of spine and synaptic properties in the hippocampus. Plays a role in placental homeostasis during the perinatal period. Plays an important role in generating the circadian rhythm of the aortic myofilament Ca(2+) sensitivity and vascular contractility by modulating the myosin light chain phosphorylation. This chain is Rho-associated protein kinase 2 (Rock2), found in Mus musculus (Mouse).